The primary structure comprises 650 residues: Protein ANTI-SILENCING 1 (650 aa).

Residues 38-169 (DEYRLYDCVL…VGSCKVVDTI (132 aa)) form the BAH domain. Disordered regions lie at residues 202–223 (NGKS…GSVR), 229–248 (AFES…EKEK), 257–359 (KSTL…QKLD), and 425–448 (VTEK…ADDN). Composition is skewed to basic and acidic residues over residues 259 to 270 (TLAEERSNKDSG) and 277 to 287 (NGKDQESEVKK). The segment covering 302 to 315 (SNSFEASGSRTIHS) has biased composition (polar residues). Basic and acidic residues-rich tracts occupy residues 348-358 (LDDRPLKKQKL) and 438-448 (RAEDKMSADDN). Residues 486-569 (TVVLLQNLDP…RPLVASFAKI (84 aa)) form the RRM domain.

In terms of assembly, component of the ASI1-AIPP1-EDM2 (AAE) RNA regulatory complex composed of at least AIPP1/EDM3, ASI1 and EDM2 and may contain CPL2, AIPP2 and AIPP3/BDT1. Binds directly to AIPP1/EDM3 and AIPP2.

Functionally, collaboratively with AIPP1/EDM3 and EDM2, the AAE complex regulates alternative RNA processing (e.g. alternative splicing) and epigenetic silencing (e.g. H3K9me2) of intronic heterochromatin-containing genes as well as genic heterochromatin-containing genes by promoting distal 3' polyadenylation; may associate with intronic heterochromatin and bind gene transcripts to modulate polyadenylation. Required to prevent promoter DNA hypermethylation and transcriptional silencing of some transgenes. Plays a similar role to that of the histone H3K9 demethylase JMJ25/IBM1 in preventing CHG methylation in the bodies of numerous genes. RNA-binding protein that ensures the proper expression of JMJ25/IBM1 full-length transcript by associating with an intronic heterochromatic repeat element of JMJ25/IBM1. Also modulates transposable elements (TE) expression. Contributes to a unique mechanism to deal with the collateral effect of silencing intronic repeat elements. The polypeptide is Protein ANTI-SILENCING 1 (Arabidopsis thaliana (Mouse-ear cress)).